Consider the following 155-residue polypeptide: Ribosomal RNA large subunit methyltransferase H (155 aa).

Residues Leu72, Gly104, and 123–128 (LAKITL) each bind S-adenosyl-L-methionine.

This sequence belongs to the RNA methyltransferase RlmH family. As to quaternary structure, homodimer.

The protein localises to the cytoplasm. It catalyses the reaction pseudouridine(1915) in 23S rRNA + S-adenosyl-L-methionine = N(3)-methylpseudouridine(1915) in 23S rRNA + S-adenosyl-L-homocysteine + H(+). Specifically methylates the pseudouridine at position 1915 (m3Psi1915) in 23S rRNA. This is Ribosomal RNA large subunit methyltransferase H from Mycoplasma mycoides subsp. mycoides SC (strain CCUG 32753 / NCTC 10114 / PG1).